The primary structure comprises 82 residues: ATP synthase subunit c (82 aa).

A run of 2 helical transmembrane segments spans residues 18-38 (LGEA…IGKI) and 61-81 (IIAA…CGFL).

Belongs to the ATPase C chain family. In terms of assembly, F-type ATPases have 2 components, F(1) - the catalytic core - and F(0) - the membrane proton channel. F(1) has five subunits: alpha(3), beta(3), gamma(1), delta(1), epsilon(1). F(0) has three main subunits: a(1), b(2) and c(10-14). The alpha and beta chains form an alternating ring which encloses part of the gamma chain. F(1) is attached to F(0) by a central stalk formed by the gamma and epsilon chains, while a peripheral stalk is formed by the delta and b chains.

The protein resides in the cell inner membrane. In terms of biological role, f(1)F(0) ATP synthase produces ATP from ADP in the presence of a proton or sodium gradient. F-type ATPases consist of two structural domains, F(1) containing the extramembraneous catalytic core and F(0) containing the membrane proton channel, linked together by a central stalk and a peripheral stalk. During catalysis, ATP synthesis in the catalytic domain of F(1) is coupled via a rotary mechanism of the central stalk subunits to proton translocation. Key component of the F(0) channel; it plays a direct role in translocation across the membrane. A homomeric c-ring of between 10-14 subunits forms the central stalk rotor element with the F(1) delta and epsilon subunits. This Azobacteroides pseudotrichonymphae genomovar. CFP2 protein is ATP synthase subunit c.